A 116-amino-acid chain; its full sequence is G antigen 2D (116 aa).

Residues 1 to 116 (MSWRGRSTYR…PEEGEKQSQC (116 aa)) form a disordered region. Composition is skewed to acidic residues over residues 31-44 (FSDEVEPATPEEGE) and 86-95 (ECEDGPDGQE). A compositionally biased stretch (basic and acidic residues) spans 102-116 (EEVKTPEEGEKQSQC).

The protein belongs to the GAGE family. In terms of tissue distribution, not expressed in normal tissues, except in testis, but expressed by a large proportion of tumors of various histological origins.

The protein is G antigen 2D (GAGE2D) of Homo sapiens (Human).